Consider the following 346-residue polypeptide: Heparan sulfate glucosamine 3-O-sulfotransferase 5 (346 aa).

The Cytoplasmic portion of the chain corresponds to 1-12 (MLFKQQAWLRQK). Residues 13–32 (LLVLGSLAVGSLLYLVARVG) form a helical; Signal-anchor for type II membrane protein membrane-spanning segment. Over 33-346 (SLDRLQPICP…QITGRTLNWP (314 aa)) the chain is Lumenal. 100–104 (KGGTR) contacts 3'-phosphoadenylyl sulfate. Substrate is bound by residues 122–128 (EIHFFDN) and 155–158 (KSPA). Residues R183 and S191 each contribute to the 3'-phosphoadenylyl sulfate site. Residue 226 to 227 (YK) coordinates substrate. Residue N287 is glycosylated (N-linked (GlcNAc...) asparagine). Y293 serves as a coordination point for 3'-phosphoadenylyl sulfate. Residues C294 and C304 are joined by a disulfide bond. Residue 309–313 (KGRIH) coordinates 3'-phosphoadenylyl sulfate.

It belongs to the sulfotransferase 1 family. Highly expressed in skeletal muscle and fetal brain, and also found in adult brain, spinal cord, cerebellum and colon.

The protein resides in the golgi apparatus membrane. It catalyses the reaction alpha-D-glucosaminyl-[heparan sulfate](n) + 3'-phosphoadenylyl sulfate = 3-sulfo-alpha-D-glucosaminyl-[heparan sulfate](n) + adenosine 3',5'-bisphosphate + H(+). Functionally, sulfotransferase that utilizes 3'-phospho-5'-adenylyl sulfate (PAPS) to catalyze the transfer of a sulfo group to position 3 of glucosamine residues in heparan. Catalyzes the rate limiting step in the biosynthesis of heparan sulfate (HSact). This modification is a crucial step in the biosynthesis of anticoagulant heparan sulfate as it completes the structure of the antithrombin pentasaccharide binding site. Also generates GlcUA-GlcNS or IdoUA-GlcNS and IdoUA2S-GlcNH2. The substrate-specific O-sulfation generates an enzyme-modified heparan sulfate which acts as a binding receptor to Herpes simplex virus-1 (HSV-1) and permits its entry. The chain is Heparan sulfate glucosamine 3-O-sulfotransferase 5 (HS3ST5) from Homo sapiens (Human).